The following is a 152-amino-acid chain: Putative aryl-alcohol dehydrogenase YFL057C (152 aa).

Belongs to the aldo/keto reductase family. Aldo/keto reductase 2 subfamily.

In terms of biological role, putative aryl-alcohol dehydrogenase. The protein is Putative aryl-alcohol dehydrogenase YFL057C of Saccharomyces cerevisiae (strain ATCC 204508 / S288c) (Baker's yeast).